A 514-amino-acid polypeptide reads, in one-letter code: UDP-N-acetylmuramyl-tripeptide synthetase (514 aa).

The UDP-N-acetyl-alpha-D-muramoyl-L-alanyl-D-glutamate site is built by Leu44 and Ser46. 129–135 (GTNGKTS) lines the ATP pocket. UDP-N-acetyl-alpha-D-muramoyl-L-alanyl-D-glutamate-binding positions include 171 to 172 (TT), Ser198, and Arg206. Lys238 carries the post-translational modification N6-carboxylysine.

Belongs to the MurCDEF family. MurE subfamily. Carboxylation is probably crucial for Mg(2+) binding and, consequently, for the gamma-phosphate positioning of ATP.

Its subcellular location is the cytoplasm. The protein operates within cell wall biogenesis; peptidoglycan biosynthesis. Its function is as follows. Catalyzes the addition of an amino acid to the nucleotide precursor UDP-N-acetylmuramoyl-L-alanyl-D-glutamate (UMAG) in the biosynthesis of bacterial cell-wall peptidoglycan. This chain is UDP-N-acetylmuramyl-tripeptide synthetase, found in Leifsonia xyli subsp. xyli (strain CTCB07).